Reading from the N-terminus, the 235-residue chain is MTELARLKFYATQPHSCSYLPEEQATTLFLDPSQPMDVHVYADLSEMGFRRSGDHLYRPHCQNCNACVPARIPVAQFNPNRQQKRIFKRNVDLQVRPVKPAFSEEYFDLYQRYIEQRHADGDMYPPSRDQFSTFLVRDLPFSRFYEFRLDGRLLAVAVTDLLPNGLSAVYTFYEPQEERRSLGRYAILWQIAEAQRLGLEAVYLGYWIKNCKKMNYKTQYRPIELLINQRWVVLN.

Belongs to the R-transferase family. Bpt subfamily.

The protein resides in the cytoplasm. It carries out the reaction N-terminal L-glutamyl-[protein] + L-leucyl-tRNA(Leu) = N-terminal L-leucyl-L-glutamyl-[protein] + tRNA(Leu) + H(+). The enzyme catalyses N-terminal L-aspartyl-[protein] + L-leucyl-tRNA(Leu) = N-terminal L-leucyl-L-aspartyl-[protein] + tRNA(Leu) + H(+). Its function is as follows. Functions in the N-end rule pathway of protein degradation where it conjugates Leu from its aminoacyl-tRNA to the N-termini of proteins containing an N-terminal aspartate or glutamate. The protein is Aspartate/glutamate leucyltransferase of Pseudomonas fluorescens (strain Pf0-1).